Reading from the N-terminus, the 143-residue chain is UPF0201 protein Pars_1985 (143 aa).

This sequence belongs to the UPF0201 family.

The protein is UPF0201 protein Pars_1985 of Pyrobaculum arsenaticum (strain DSM 13514 / JCM 11321 / PZ6).